We begin with the raw amino-acid sequence, 75 residues long: Conotoxin Im23.5 (75 aa).

An N-terminal signal peptide occupies residues 1–23 (MKFFTCLLLLLVVLTVVFDNVDA). 3 cysteine pairs are disulfide-bonded: Cys-24-Cys-28, Cys-37-Cys-40, and Cys-41-Cys-43. Residues 24-50 (CDRSCTGVMGHPSCATCCACFTSAGKR) constitute a propeptide that is removed on maturation.

As to expression, expressed by the venom duct.

The protein localises to the secreted. Functionally, probable neurotoxin. In Conus imperialis (Imperial cone), this protein is Conotoxin Im23.5.